Here is a 339-residue protein sequence, read N- to C-terminus: Ferrochelatase (339 aa).

The Fe cation site is built by H202 and E283.

Belongs to the ferrochelatase family.

It is found in the cytoplasm. The catalysed reaction is heme b + 2 H(+) = protoporphyrin IX + Fe(2+). It functions in the pathway porphyrin-containing compound metabolism; protoheme biosynthesis; protoheme from protoporphyrin-IX: step 1/1. Its function is as follows. Catalyzes the ferrous insertion into protoporphyrin IX. This Psychrobacter cryohalolentis (strain ATCC BAA-1226 / DSM 17306 / VKM B-2378 / K5) protein is Ferrochelatase.